We begin with the raw amino-acid sequence, 229 residues long: Urease accessory protein UreF (229 aa).

The protein belongs to the UreF family. UreD, UreF and UreG form a complex that acts as a GTP-hydrolysis-dependent molecular chaperone, activating the urease apoprotein by helping to assemble the nickel containing metallocenter of UreC. The UreE protein probably delivers the nickel.

It localises to the cytoplasm. Its function is as follows. Required for maturation of urease via the functional incorporation of the urease nickel metallocenter. The protein is Urease accessory protein UreF of Staphylococcus aureus (strain MRSA252).